The sequence spans 222 residues: MKLEIPFDEEGIFLERKTRFTGIVSVGKERTQAHIHNTGRLPLLSPGKRVLLKRAKSERRKTKWDLLAVEYREEFVFVHSGYHSLVAERILGEMFPGARIEREKTSGNSVLDFLVDGKTFVEVKGCTFEENGVAMFPDAPTVRGKRHVEELIRCVESGFRALLLILVFLESRCFLPNRKVDPFFSEIFWHALSKGVDVCVFRLKYDGEYLHSMGNLPICEEV.

This sequence belongs to the SfsA family.

This chain is Sugar fermentation stimulation protein homolog, found in Thermotoga neapolitana (strain ATCC 49049 / DSM 4359 / NBRC 107923 / NS-E).